The sequence spans 111 residues: Viscotoxin-A3 (111 aa).

An N-terminal signal peptide occupies residues 1–26 (MEVVRGSSLVLLVLLLGALLVSQVES). Cystine bridges form between Cys-29–Cys-66, Cys-30–Cys-58, and Cys-42–Cys-52. Residues 73–111 (FYCTLGCESSQCATNSNGDAEAVRCKTACSDLCQDVDDA) constitute a propeptide, acidic domain.

It belongs to the plant thionin (TC 1.C.44) family.

The protein resides in the secreted. In terms of biological role, thionins are small plant proteins which are toxic to animal cells. They seem to exert their toxic effect at the level of the cell membrane. Their precise function is not known. The protein is Viscotoxin-A3 (THI2.1) of Viscum album (European mistletoe).